The primary structure comprises 285 residues: Small ribosomal subunit biogenesis GTPase RsgA (285 aa).

The region spanning Asp-56 to Ile-217 is the CP-type G domain. Residues Asn-105–Asp-108 and Gly-159–Ser-167 contribute to the GTP site. Residues Cys-241, Cys-246, His-248, and Cys-254 each coordinate Zn(2+).

Belongs to the TRAFAC class YlqF/YawG GTPase family. RsgA subfamily. As to quaternary structure, monomer. Associates with 30S ribosomal subunit, binds 16S rRNA. The cofactor is Zn(2+).

Its subcellular location is the cytoplasm. In terms of biological role, one of several proteins that assist in the late maturation steps of the functional core of the 30S ribosomal subunit. Helps release RbfA from mature subunits. May play a role in the assembly of ribosomal proteins into the subunit. Circularly permuted GTPase that catalyzes slow GTP hydrolysis, GTPase activity is stimulated by the 30S ribosomal subunit. The sequence is that of Small ribosomal subunit biogenesis GTPase RsgA from Fusobacterium nucleatum subsp. nucleatum (strain ATCC 25586 / DSM 15643 / BCRC 10681 / CIP 101130 / JCM 8532 / KCTC 2640 / LMG 13131 / VPI 4355).